The primary structure comprises 448 residues: Putative RNA-ligase (448 aa).

This sequence belongs to the asfivirus M448R family.

It is found in the virion. This chain is Putative RNA-ligase, found in Ornithodoros (relapsing fever ticks).